Reading from the N-terminus, the 127-residue chain is Small ribosomal subunit protein uS11 (127 aa).

It belongs to the universal ribosomal protein uS11 family. As to quaternary structure, part of the 30S ribosomal subunit. Interacts with proteins S7 and S18. Binds to IF-3.

Functionally, located on the platform of the 30S subunit, it bridges several disparate RNA helices of the 16S rRNA. Forms part of the Shine-Dalgarno cleft in the 70S ribosome. In Ehrlichia ruminantium (strain Gardel), this protein is Small ribosomal subunit protein uS11.